Consider the following 567-residue polypeptide: Lactase-like protein (567 aa).

An N-terminal signal peptide occupies residues 1-21 (MKPVWVATLLWMLLLVPRLGA). Over 23-541 (RKGSPEEASF…LLSHMQMVTE (519 aa)) the chain is Extracellular. 3 N-linked (GlcNAc...) asparagine glycosylation sites follow: N80, N171, and N245. A helical transmembrane segment spans residues 542 to 562 (IVVPTVCSLCVLITAVLLMLL). Topologically, residues 563–567 (LRRQS) are cytoplasmic.

The protein belongs to the glycosyl hydrolase 1 family. Klotho subfamily. In terms of assembly, may form dimers.

The protein resides in the endoplasmic reticulum membrane. In terms of biological role, plays a role in formation of the lens suture in the eye, which is important for normal optical properties of the lens. This is Lactase-like protein (LCTL) from Homo sapiens (Human).